A 279-amino-acid chain; its full sequence is Probable phosphatase phospho1 (279 aa).

Aspartate 41 acts as the Nucleophile in catalysis. Positions 41 and 43 each coordinate Mg(2+). The Proton donor role is filled by aspartate 43. Residues aspartate 52 and aspartate 133 each coordinate substrate. Aspartate 215 is a binding site for Mg(2+).

The protein belongs to the HAD-like hydrolase superfamily. PHOSPHO family. The cofactor is Mg(2+).

It is found in the extracellular vesicle. The catalysed reaction is phosphoethanolamine + H2O = ethanolamine + phosphate. The enzyme catalyses phosphocholine + H2O = choline + phosphate. Its function is as follows. Phosphatase that has a high activity toward phosphoethanolamine (PEA) and phosphocholine (PCho). Involved in the generation of inorganic phosphate for bone mineralization. In Danio rerio (Zebrafish), this protein is Probable phosphatase phospho1 (phospho1).